A 397-amino-acid chain; its full sequence is Major outer membrane porin, serovar L3 (397 aa).

Residues 1 to 22 form the signal peptide; sequence MKKLLKSVLVFAALSSASSLQA.

The protein belongs to the chlamydial porin (CP) (TC 1.B.2) family. Part of a disulfide cross-linked outer membrane complex (COMC) composed of the major outer membrane porin (MOMP), the small cysteine-rich protein (OmcA) and the large cysteine-rich periplasmic protein (OmcB).

It localises to the cell outer membrane. Its function is as follows. In elementary bodies (EBs, the infectious stage, which is able to survive outside the host cell) provides the structural integrity of the outer envelope through disulfide cross-links with the small cysteine-rich protein and the large cysteine-rich periplasmic protein. It has been described in publications as the Sarkosyl-insoluble COMC (Chlamydia outer membrane complex), and serves as the functional equivalent of peptidoglycan. Functionally, permits diffusion of specific solutes through the outer membrane. This chain is Major outer membrane porin, serovar L3 (ompA), found in Chlamydia trachomatis.